The primary structure comprises 126 residues: Small ribosomal subunit protein uS12 (126 aa).

A 3-methylthioaspartic acid modification is found at aspartate 89.

Belongs to the universal ribosomal protein uS12 family. As to quaternary structure, part of the 30S ribosomal subunit. Contacts proteins S8 and S17. May interact with IF1 in the 30S initiation complex.

Its function is as follows. With S4 and S5 plays an important role in translational accuracy. Functionally, interacts with and stabilizes bases of the 16S rRNA that are involved in tRNA selection in the A site and with the mRNA backbone. Located at the interface of the 30S and 50S subunits, it traverses the body of the 30S subunit contacting proteins on the other side and probably holding the rRNA structure together. The combined cluster of proteins S8, S12 and S17 appears to hold together the shoulder and platform of the 30S subunit. This Polynucleobacter necessarius subsp. necessarius (strain STIR1) protein is Small ribosomal subunit protein uS12.